A 209-amino-acid chain; its full sequence is Small ribosomal subunit protein uS3 (209 aa).

Positions 17 to 86 (IDEYLEKELR…NPQIEVEEIK (70 aa)) constitute a KH type-2 domain.

The protein belongs to the universal ribosomal protein uS3 family. As to quaternary structure, part of the 30S ribosomal subunit.

Binds the lower part of the 30S subunit head. The chain is Small ribosomal subunit protein uS3 from Thermococcus gammatolerans (strain DSM 15229 / JCM 11827 / EJ3).